The sequence spans 657 residues: Histidine ammonia-lyase (657 aa).

Residues 253–255 (ASG) constitute a cross-link (5-imidazolinone (Ala-Gly)). Ser254 carries the post-translational modification 2,3-didehydroalanine (Ser). The residue at position 396 (Thr396) is a Phosphothreonine. Residue Ser635 is modified to Phosphoserine. Residue Thr637 is modified to Phosphothreonine. Residue Ser648 is modified to Phosphoserine.

Belongs to the PAL/histidase family. In terms of processing, contains an active site 4-methylidene-imidazol-5-one (MIO), which is formed autocatalytically by cyclization and dehydration of residues Ala-Ser-Gly. In terms of tissue distribution, liver and skin.

It carries out the reaction L-histidine = trans-urocanate + NH4(+). It participates in amino-acid degradation; L-histidine degradation into L-glutamate; N-formimidoyl-L-glutamate from L-histidine: step 1/3. The chain is Histidine ammonia-lyase (Hal) from Rattus norvegicus (Rat).